We begin with the raw amino-acid sequence, 250 residues long: 2,5-dichloro-2,5-cyclohexadiene-1,4-diol dehydrogenase (250 aa).

9 to 34 is an NAD(+) binding site; sequence IIVTGGGSGIGRATVELLVASGANVA. Serine 141 contributes to the substrate binding site. Tyrosine 154 acts as the Proton acceptor in catalysis.

It belongs to the short-chain dehydrogenases/reductases (SDR) family.

It catalyses the reaction 2,5-dichlorocyclohexa-2,5-dien-1,4-diol + NAD(+) = 2,5-dichlorohydroquinone + NADH + H(+). Its pathway is xenobiotic degradation; gamma-hexachlorocyclohexane degradation. Functionally, catalyzes the dehydrogenation of 2,5-dichloro-2,5-cyclohexadiene-1,4-diol (2,5-DDOL) to 2,5-dichlorohydroquinone (2,5-DCHQ), a step in the degradation of gamma-hexachlorocyclohexane (gamma-HCH or lindane). Has an essential role in this assimilation pathway that allows S.japonicum UT26 to grow on gamma-HCH as the sole source of carbon and energy. In Sphingobium indicum (strain DSM 16413 / CCM 7287 / MTCC 6362 / UT26 / NBRC 101211 / UT26S) (Sphingobium japonicum), this protein is 2,5-dichloro-2,5-cyclohexadiene-1,4-diol dehydrogenase.